The sequence spans 315 residues: Ribosomal RNA small subunit methyltransferase H (315 aa).

S-adenosyl-L-methionine contacts are provided by residues 37 to 39 (GGH), Asp-57, Phe-83, Asp-105, and Gln-112. A disordered region spans residues 296-315 (EVKANPRSRSAVMRVAEKVR).

It belongs to the methyltransferase superfamily. RsmH family.

The protein localises to the cytoplasm. The catalysed reaction is cytidine(1402) in 16S rRNA + S-adenosyl-L-methionine = N(4)-methylcytidine(1402) in 16S rRNA + S-adenosyl-L-homocysteine + H(+). In terms of biological role, specifically methylates the N4 position of cytidine in position 1402 (C1402) of 16S rRNA. This chain is Ribosomal RNA small subunit methyltransferase H, found in Stutzerimonas stutzeri (strain A1501) (Pseudomonas stutzeri).